Reading from the N-terminus, the 713-residue chain is Mitochondrial intermediate peptidase (713 aa).

A mitochondrion-targeting transit peptide spans M1–R35. An N6-acetyllysine modification is found at K126. H495 is a binding site for Zn(2+). Residue E496 is part of the active site. Positions 499 and 502 each coordinate Zn(2+).

This sequence belongs to the peptidase M3 family. In terms of assembly, monomer. Zn(2+) is required as a cofactor.

The protein resides in the mitochondrion matrix. The enzyme catalyses Release of an N-terminal octapeptide as second stage of processing of some proteins imported into the mitochondrion.. Its activity is regulated as follows. Activity is divalent cation-dependent. It is stimulated by manganese, magnesium or calcium ions and reversibly inhibited by zinc, cobalt and iron. Its function is as follows. Cleaves proteins, imported into the mitochondrion, to their mature size. This is Mitochondrial intermediate peptidase (MIPEP) from Pongo abelii (Sumatran orangutan).